Here is a 197-residue protein sequence, read N- to C-terminus: dITP/XTP pyrophosphatase (197 aa).

Position 10–15 (serine 10–lysine 15) interacts with substrate. Mg(2+)-binding residues include glutamate 41 and aspartate 70. Aspartate 70 functions as the Proton acceptor in the catalytic mechanism. Residues serine 71, phenylalanine 154–aspartate 157, lysine 177, and histidine 182–arginine 183 contribute to the substrate site.

It belongs to the HAM1 NTPase family. Homodimer. The cofactor is Mg(2+).

It catalyses the reaction XTP + H2O = XMP + diphosphate + H(+). The catalysed reaction is dITP + H2O = dIMP + diphosphate + H(+). The enzyme catalyses ITP + H2O = IMP + diphosphate + H(+). In terms of biological role, pyrophosphatase that catalyzes the hydrolysis of nucleoside triphosphates to their monophosphate derivatives, with a high preference for the non-canonical purine nucleotides XTP (xanthosine triphosphate), dITP (deoxyinosine triphosphate) and ITP. Seems to function as a house-cleaning enzyme that removes non-canonical purine nucleotides from the nucleotide pool, thus preventing their incorporation into DNA/RNA and avoiding chromosomal lesions. The polypeptide is dITP/XTP pyrophosphatase (Pseudomonas syringae pv. tomato (strain ATCC BAA-871 / DC3000)).